A 422-amino-acid polypeptide reads, in one-letter code: Roquefortine prenyltransferase roqD (422 aa).

Glu-100 lines the substrate pocket. Residues Arg-113, Lys-200, and Tyr-202 each contribute to the dimethylallyl diphosphate site. Tyr-204 serves as a coordination point for substrate. 5 residues coordinate dimethylallyl diphosphate: Lys-268, Tyr-270, Tyr-353, Tyr-416, and Tyr-420.

Belongs to the tryptophan dimethylallyltransferase family.

It functions in the pathway alkaloid biosynthesis. Functionally, roquefortine prenyltransferase; part of the gene cluster that mediates the biosynthesis of the mycotoxins roquefortine C and meleagrin. The first stage is catalyzed by the dipeptide synthase roqA which condenses histidine and tryptophan to produce histidyltryptophanyldiketopiperazine (HTD). HTD is then converted to roquefortine C through two possible pathways. In the first pathway, prenyltransferase roqD transforms HTD to the intermediate roquefortine D, which is in turn converted to roquefortine C by the cytochrome P450 monooxygenase roqR. In the second pathway, HTD is first converted to the intermediate dehydrohistidyltryptophanyldi-ketopiperazine (DHTD) by roqR which is then prenylated by roqD to form roquefortine C. Roquefortine C can be further transformed to meleagrin via three more reactions including oxydation to glandicolin A by roqM, which is further reduced to glandicoline B by roqO. Finally, glandicoline B is converted to meleagrin by the glandicoline B O-methyltransferase roqN. More studies identified further branching and additional metabolites produced by the roquefortine/meleagrin cluster, including roquefortine F, roquefortine L, roquefortine M, roquefortine N and neoxaline. This Penicillium rubens (strain ATCC 28089 / DSM 1075 / NRRL 1951 / Wisconsin 54-1255) (Penicillium chrysogenum) protein is Roquefortine prenyltransferase roqD.